The sequence spans 340 residues: MRGTPAVLVDGKPVGAKDGSMFDAAGFARTLKGRAWLRRVGAVVEIPAELVEVQLRYGGAAGREFVEGLPGRVAEFLERWGLRVAGPAMHGMTALVLPVVRADGTEAALKLLVPDEESAGEPVALRAWDGRGCVRLLEWDGPTGTLLLERLDAGRHLSGLVERDARAAVTVVAGLLARLTSVRAPEGLRGLGEVAAGLLAGVPEAAGRLADAGERRLLRDCAAALAEVAAEPGDRLLHWDLHFGNVLAGEREPWLAIDPKPLAGDPGFELLPALVNGFRAGEVGWRFDLLTGVVGLDRERARAWTLGRVVQNCLWEVEDGEVALPEREVAVAEVLLGRAG.

Aspartate 240 acts as the Proton acceptor in catalysis.

This sequence belongs to the aminoglycoside phosphotransferase family.

Potential phosphotransferase that inactivates hydroxyurea by phosphorylation of the hydroxy group in the hydroxylamine moiety. This is Hydroxyurea phosphotransferase (hur) from Kitasatospora aureofaciens (Streptomyces aureofaciens).